A 389-amino-acid chain; its full sequence is Probable transcription factor FL (389 aa).

2 disordered regions span residues 1 to 41 (MDPN…ANVP) and 140 to 226 (EHDM…HPFV). Over residues 19-39 (PPAPAPVPPPPPPPPPPPPAN) the composition is skewed to pro residues. A compositionally biased stretch (basic residues) spans 159–180 (VTGKKQAKKGSAARKGKKARRK). The Nuclear localization signal signature appears at 161-168 (GKKQAKKG). The span at 190–201 (QEDEMDCCDEDG) shows a compositional bias: acidic residues. 3 consecutive DNA-binding regions follow at residues 221-225 (REHPF), 290-297 (NKPKMRHY), and 361-364 (YVPT).

This sequence belongs to the FLO/LFY family. In terms of assembly, interacts with APO1. In very young panicle but not in mature florets, mature leaves, roots or apical meristems.

It is found in the nucleus. Functionally, probable transcription factor. Together with APO1, involved in the temporal regulation of meristem size and identity during both vegetative and reproductive developments through interaction with APO1. Promotes flowering. This is Probable transcription factor FL from Oryza sativa subsp. japonica (Rice).